The following is a 572-amino-acid chain: Proline--tRNA ligase (572 aa).

This sequence belongs to the class-II aminoacyl-tRNA synthetase family. ProS type 1 subfamily. In terms of assembly, homodimer.

The protein localises to the cytoplasm. The enzyme catalyses tRNA(Pro) + L-proline + ATP = L-prolyl-tRNA(Pro) + AMP + diphosphate. Its function is as follows. Catalyzes the attachment of proline to tRNA(Pro) in a two-step reaction: proline is first activated by ATP to form Pro-AMP and then transferred to the acceptor end of tRNA(Pro). As ProRS can inadvertently accommodate and process non-cognate amino acids such as alanine and cysteine, to avoid such errors it has two additional distinct editing activities against alanine. One activity is designated as 'pretransfer' editing and involves the tRNA(Pro)-independent hydrolysis of activated Ala-AMP. The other activity is designated 'posttransfer' editing and involves deacylation of mischarged Ala-tRNA(Pro). The misacylated Cys-tRNA(Pro) is not edited by ProRS. The sequence is that of Proline--tRNA ligase from Salmonella newport (strain SL254).